The following is a 276-amino-acid chain: SRR1-like protein (276 aa).

Ser-30 bears the Phosphoserine mark. Tyr-34 is modified (phosphotyrosine).

Belongs to the SRR1 family.

Its function is as follows. Possible regulator involved in a circadian clock input pathway. This Drosophila melanogaster (Fruit fly) protein is SRR1-like protein.